Consider the following 108-residue polypeptide: Malonate decarboxylase acyl carrier protein (108 aa).

S35 is modified (O-(phosphoribosyl dephospho-coenzyme A)serine).

The protein belongs to the MdcC family. In terms of processing, covalently binds the prosthetic group of malonate decarboxylase.

The protein localises to the cytoplasm. Functionally, subunit of malonate decarboxylase, it is an acyl carrier protein to which acetyl and malonyl thioester residues are bound via a 2'-(5''-phosphoribosyl)-3'-dephospho-CoA prosthetic group and turn over during the catalytic mechanism. This is Malonate decarboxylase acyl carrier protein from Burkholderia cepacia (Pseudomonas cepacia).